The following is a 136-amino-acid chain: Small ribosomal subunit protein bS6 (136 aa).

Residues 97–128 (EKEQSAMLSRPDRDDFPGKDEERPRPSRRQYE) are compositionally biased toward basic and acidic residues. The interval 97-136 (EKEQSAMLSRPDRDDFPGKDEERPRPSRRQYEDVVEGGVE) is disordered.

It belongs to the bacterial ribosomal protein bS6 family.

Binds together with bS18 to 16S ribosomal RNA. In Bartonella bacilliformis (strain ATCC 35685 / KC583 / Herrer 020/F12,63), this protein is Small ribosomal subunit protein bS6.